We begin with the raw amino-acid sequence, 177 residues long: Large ribosomal subunit protein uL6 (177 aa).

Belongs to the universal ribosomal protein uL6 family. Part of the 50S ribosomal subunit.

Its function is as follows. This protein binds to the 23S rRNA, and is important in its secondary structure. It is located near the subunit interface in the base of the L7/L12 stalk, and near the tRNA binding site of the peptidyltransferase center. The polypeptide is Large ribosomal subunit protein uL6 (Vibrio cholerae serotype O1 (strain ATCC 39541 / Classical Ogawa 395 / O395)).